We begin with the raw amino-acid sequence, 84 residues long: Toxin BmKaTx13 (84 aa).

The first 19 residues, 1–19 (MNYLVMISFALLLMKGVES), serve as a signal peptide directing secretion. One can recognise an LCN-type CS-alpha/beta domain in the interval 21 to 83 (RDAYIAKPEN…VPIRVPGKCH (63 aa)). 4 cysteine pairs are disulfide-bonded: Cys31–Cys82, Cys35–Cys55, Cys41–Cys65, and Cys45–Cys67. Position 84 (Arg84) is a propeptide, removed by a carboxypeptidase.

Belongs to the long (4 C-C) scorpion toxin superfamily. Sodium channel inhibitor family. Alpha subfamily. In terms of tissue distribution, expressed by the venom gland.

It localises to the secreted. Functionally, alpha toxins bind voltage-independently at site-3 of sodium channels (Nav) and inhibit the inactivation of the activated channels, thereby blocking neuronal transmission. This toxin is active against mammals. In Olivierus martensii (Manchurian scorpion), this protein is Toxin BmKaTx13.